The chain runs to 150 residues: UPF0756 membrane protein HD_1071 (150 aa).

4 helical membrane passes run 1–21, 52–72, 82–102, and 114–134; these read MSLQFNPIGLFLVALILLGVL, YGLTIGIIILTIGVLSPIVSG, ILSWKMALAISIGIFVAWLGG, and IITGLLIGTIIGIAFFGGIPV.

Belongs to the UPF0756 family.

The protein resides in the cell membrane. The polypeptide is UPF0756 membrane protein HD_1071 (Haemophilus ducreyi (strain 35000HP / ATCC 700724)).